We begin with the raw amino-acid sequence, 207 residues long: Large ribosomal subunit protein uL4 (207 aa).

The protein belongs to the universal ribosomal protein uL4 family. As to quaternary structure, part of the 50S ribosomal subunit.

In terms of biological role, one of the primary rRNA binding proteins, this protein initially binds near the 5'-end of the 23S rRNA. It is important during the early stages of 50S assembly. It makes multiple contacts with different domains of the 23S rRNA in the assembled 50S subunit and ribosome. Its function is as follows. Forms part of the polypeptide exit tunnel. This chain is Large ribosomal subunit protein uL4, found in Geobacter sulfurreducens (strain ATCC 51573 / DSM 12127 / PCA).